Here is a 1257-residue protein sequence, read N- to C-terminus: Period circadian protein homolog 2 (1257 aa).

Positions 1–59 are disordered; sequence MNGYVDFSPSPTSPTQEPGEPQPTQAVLQEDVDMSSGSSGNENCSTGRDSQGSDCDDSG. A compositionally biased stretch (low complexity) spans 8 to 25; sequence SPSPTSPTQEPGEPQPTQ. Over residues 35 to 53 the composition is skewed to polar residues; the sequence is SSGSSGNENCSTGRDSQGS. The short motif at 109–118 is the Nuclear export signal 1 element; it reads LIRTLRELKV. Residues 179 to 246 enclose the PAS 1 domain; the sequence is ITSEYIVKNS…FHSYTTPYKL (68 aa). Positions 306 to 310 match the LXXLL motif; that stretch reads LCCLL. The PAS 2 domain occupies 319–385; it reads YEAPRIPPEK…MLAIHKKILQ (67 aa). In terms of domain architecture, PAC spans 393-436; sequence YSPIRFRTRNGEYITLDTSWSSFINPWSRKISFIIGRHKVRVGP. The Nuclear export signal 2 signature appears at 460-469; sequence LTEQIHRLLM. The interval 471–567 is disordered; sequence PVPHSGSSGY…RDSSGASLPK (97 aa). An important for protein stability region spans residues 478 to 482; it reads SGYGS. 2 stretches are compositionally biased toward polar residues: residues 493–504 and 518–528; these read MSQTSSSDSNGQ and SGKSQSKSHFS. A CSNK1E binding domain region spans residues 510 to 709; it reads RRSGIFKTSG…DAAGGLSQEK (200 aa). 5 positions are modified to phosphoserine: Ser525, Ser528, Ser531, Ser538, and Ser544. Positions 541-555 are enriched in polar residues; the sequence is EMQSSPPAQVRSVTT. Residue Thr554 is modified to Phosphothreonine. Phosphoserine is present on residues Ser659, Ser693, Ser697, Ser706, Ser758, and Ser763. Disordered regions lie at residues 678–706 and 757–833; these read DKKPQPELETVEDVASGPESQDDAAGGLS and RSRA…CPSA. Positions 778–794 match the Nuclear localization signal motif; sequence KKTGKNRKLKSKRVKTR. The span at 779–792 shows a compositional bias: basic residues; sequence KTGKNRKLKSKRVK. A compositionally biased stretch (low complexity) spans 821 to 832; the sequence is SPSDTSQSSCPS. Thr858 carries the phosphothreonine modification. The segment at 882 to 1067 is interaction with PPARG; it reads EFAVQPLPFA…DLCSATGSAL (186 aa). A Phosphoserine modification is found at Ser939. A Phosphothreonine modification is found at Thr964. The residue at position 971 (Ser971) is a Phosphoserine. The short motif at 983-990 is the Nuclear export signal 3 element; sequence LQLNLLQL. The disordered stretch occupies residues 993 to 1044; that stretch reads APESSTGAAGTLGTTGTAASGLDCTSGASRDRQPKAPPTCSEPSDTQNSDAI. The span at 996–1014 shows a compositional bias: low complexity; it reads SSTGAAGTLGTTGTAASGL. A compositionally biased stretch (polar residues) spans 1033–1044; that stretch reads SEPSDTQNSDAI. The LXXLL motif lies at 1051-1055; it reads LNLLL. Residues 1070 to 1089 show a composition bias toward low complexity; that stretch reads SGASATSDSLGSSSLGCDTS. Positions 1070–1108 are disordered; it reads SGASATSDSLGSSSLGCDTSRSGAGSSDTSHTSKYFGSI. The segment covering 1090-1108 has biased composition (polar residues); the sequence is RSGAGSSDTSHTSKYFGSI. Ser1126 is subject to Phosphoserine. Residues 1157 to 1257 form a CRY binding domain region; the sequence is SRDLQAVLKE…LANPRKEAQT (101 aa). The disordered stretch occupies residues 1226-1257; it reads EEDSPSLGLCDTSEAKEEESGQLANPRKEAQT.

Homodimer. Component of the circadian core oscillator, which includes the CRY proteins, CLOCK or NPAS2, BMAL1 or BMAL2, CSNK1D and/or CSNK1E, TIMELESS, and the PER proteins. Interacts with CLOCK-BMAL1 (off DNA). Interacts directly with PER1 and PER3, and through a C-terminal domain, with CRY1 and CRY2. Interacts (via PAS 2 domain) with TIMELESS. Interacts with NFIL3. Different large complexes have been identified with different repressive functions. The core of PER complexes is composed of at least PER1, PER2, PER3, CRY1, CRY2, CSNK1D and/or CSNK1E. The large PER complex involved in the repression of transcriptional termination is composed of at least PER2, CDK9, DDX5, DHX9, NCBP1 and POLR2A (active). The large PER complex involved in the histone deacetylation is composed of at least HDAC1, PER2, SFPQ and SIN3A. The large PER complex involved in the histone methylation is composed of at least PER2, CBX3, TRIM28, SUV39H1 and/or SUV39H2; CBX3 mediates the formation of the complex. Interacts with SETX; the interaction inhibits termination of circadian target genes. Interacts with the nuclear receptors HNF4A, NR1D1, NR4A2, RORA, PPARA, PPARG and THRA; the interaction with at least PPARG is ligand dependent. Interacts with PML. Interacts (phosphorylated) with BTRC and FBXW11; the interactions trigger proteasomal degradation. Interacts with NONO and SFPQ. Interacts with CAVIN3. Interacts with MAGEL2. Interacts with MAP1LC3B. Interacts with HNF4A. Acetylated. Deacetylated by SIRT1, resulting in decreased protein stability. Deacetylated by SIRT6, preventing its degradation by the proteasome, resulting in increased protein stability. In terms of processing, phosphorylated by CSNK1E and CSNK1D. Phosphorylation results in PER2 protein degradation. May be dephosphorylated by PP1. Post-translationally, ubiquitinated, leading to its proteasomal degradation. Ubiquitination may be inhibited by CRY1. As to expression, expressed in all tissues examined including eye, brain, heart, lung, spleen, liver, pancreas and kidney. In the CNS, highly expressed in the SCN, internal granular layer of granular cells of the olfactory bulb, tuberculum olfactorium, piriform cortex, gyrus dentatus of the hippocampus, cerebellum, pars tuberalis/median eminence, and pituitary, and moderately in the tenia tecta, caudate putamen, accumbens nucleus, superior and inferior colliculus and pineal gland.

It localises to the nucleus. It is found in the cytoplasm. The protein resides in the perinuclear region. Its function is as follows. Transcriptional repressor which forms a core component of the circadian clock. The circadian clock, an internal time-keeping system, regulates various physiological processes through the generation of approximately 24 hour circadian rhythms in gene expression, which are translated into rhythms in metabolism and behavior. It is derived from the Latin roots 'circa' (about) and 'diem' (day) and acts as an important regulator of a wide array of physiological functions including metabolism, sleep, body temperature, blood pressure, endocrine, immune, cardiovascular, and renal function. Consists of two major components: the central clock, residing in the suprachiasmatic nucleus (SCN) of the brain, and the peripheral clocks that are present in nearly every tissue and organ system. Both the central and peripheral clocks can be reset by environmental cues, also known as Zeitgebers (German for 'timegivers'). The predominant Zeitgeber for the central clock is light, which is sensed by retina and signals directly to the SCN. The central clock entrains the peripheral clocks through neuronal and hormonal signals, body temperature and feeding-related cues, aligning all clocks with the external light/dark cycle. Circadian rhythms allow an organism to achieve temporal homeostasis with its environment at the molecular level by regulating gene expression to create a peak of protein expression once every 24 hours to control when a particular physiological process is most active with respect to the solar day. Transcription and translation of core clock components (CLOCK, NPAS2, BMAL1, BMAL2, PER1, PER2, PER3, CRY1 and CRY2) plays a critical role in rhythm generation, whereas delays imposed by post-translational modifications (PTMs) are important for determining the period (tau) of the rhythms (tau refers to the period of a rhythm and is the length, in time, of one complete cycle). A diurnal rhythm is synchronized with the day/night cycle, while the ultradian and infradian rhythms have a period shorter and longer than 24 hours, respectively. Disruptions in the circadian rhythms contribute to the pathology of cardiovascular diseases, cancer, metabolic syndrome and aging. A transcription/translation feedback loop (TTFL) forms the core of the molecular circadian clock mechanism. Transcription factors, CLOCK or NPAS2 and BMAL1 or BMAL2, form the positive limb of the feedback loop, act in the form of a heterodimer and activate the transcription of core clock genes and clock-controlled genes (involved in key metabolic processes), harboring E-box elements (5'-CACGTG-3') within their promoters. The core clock genes: PER1/2/3 and CRY1/2 which are transcriptional repressors form the negative limb of the feedback loop and interact with the CLOCK|NPAS2-BMAL1|BMAL2 heterodimer inhibiting its activity and thereby negatively regulating their own expression. This heterodimer also activates nuclear receptors NR1D1/2 and RORA/B/G, which form a second feedback loop and which activate and repress BMAL1 transcription, respectively. PER1 and PER2 proteins transport CRY1 and CRY2 into the nucleus with appropriate circadian timing, but also contribute directly to repression of clock-controlled target genes through interaction with several classes of RNA-binding proteins, helicases and others transcriptional repressors. PER appears to regulate circadian control of transcription by at least three different modes. First, interacts directly with the CLOCK-BMAL1 at the tail end of the nascent transcript peak to recruit complexes containing the SIN3-HDAC that remodel chromatin to repress transcription. Second, brings H3K9 methyltransferases such as SUV39H1 and SUV39H2 to the E-box elements of the circadian target genes, like PER2 itself or PER1. The recruitment of each repressive modifier to the DNA seems to be very precisely temporally orchestrated by the large PER complex, the deacetylases acting before than the methyltransferases. Additionally, large PER complexes are also recruited to the target genes 3' termination site through interactions with RNA-binding proteins and helicases that may play a role in transcription termination to regulate transcription independently of CLOCK-BMAL1 interactions. Recruitment of large PER complexes to the elongating polymerase at PER and CRY termination sites inhibited SETX action, impeding RNA polymerase II release and thereby repressing transcriptional reinitiation. May propagate clock information to metabolic pathways via the interaction with nuclear receptors. Coactivator of PPARA and corepressor of NR1D1, binds rhythmically at the promoter of nuclear receptors target genes like BMAL1 or G6PC1. Directly and specifically represses PPARG proadipogenic activity by blocking PPARG recruitment to target promoters and thereby transcriptional activation. Required for fatty acid and lipid metabolism, is involved as well in the regulation of circulating insulin levels. Plays an important role in the maintenance of cardiovascular functions through the regulation of NO and vasodilatatory prostaglandins production in aortas. Controls circadian glutamate uptake in synaptic vesicles through the regulation of VGLUT1 expression. May also be involved in the regulation of inflammatory processes. Represses the CLOCK-BMAL1 induced transcription of BHLHE40/DEC1 and ATF4. Negatively regulates the formation of the TIMELESS-CRY1 complex by competing with TIMELESS for binding to CRY1. This is Period circadian protein homolog 2 from Rattus norvegicus (Rat).